The sequence spans 270 residues: Glutamate racemase (270 aa).

Substrate is bound by residues 14–15 and 46–47; these read DS and YG. The active-site Proton donor/acceptor is Cys77. Substrate is bound at residue 78 to 79; that stretch reads NT. The active-site Proton donor/acceptor is the Cys189. A substrate-binding site is contributed by 190 to 191; that stretch reads TH.

This sequence belongs to the aspartate/glutamate racemases family.

The catalysed reaction is L-glutamate = D-glutamate. It functions in the pathway cell wall biogenesis; peptidoglycan biosynthesis. Functionally, provides the (R)-glutamate required for cell wall biosynthesis. In Neisseria gonorrhoeae (strain ATCC 700825 / FA 1090), this protein is Glutamate racemase.